A 22-amino-acid polypeptide reads, in one-letter code: MICOS complex subunit MIC60 (22 aa).

This sequence belongs to the MICOS complex subunit Mic60 family. As to quaternary structure, component of the mitochondrial contact site and cristae organizing system (MICOS) complex, composed of at least MICOS10/MIC10, CHCHD3/MIC19, CHCHD6/MIC25, APOOL/MIC27, IMMT/MIC60, APOO/MIC23/MIC26 and MICOS13/MIC13. This complex was also known under the names MINOS or MitOS complex. The MICOS complex associates with mitochondrial outer membrane proteins SAMM50, MTX1 and MTX2 (together described as components of the mitochondrial outer membrane sorting assembly machinery (SAM) complex) and DNAJC11, mitochondrial inner membrane protein TMEM11 and with HSPA9. The MICOS and SAM complexes together with DNAJC11 are part of a large protein complex spanning both membranes termed the mitochondrial intermembrane space bridging (MIB) complex. Interacts with HSPA1A/HSPA1B and OPA1, preferentially with the soluble OPA1 form. Interacts with MICOS13/MIC13, MICOS10/MIC10, CHCHD3/MIC19, CHCHD6/MIC25, SAMM50 and TMEM11. Interacts with APOO/MIC23/MIC26 and APOOL/MIC27. Interacts with ARMC1. Interacts with ARMC12.

The protein resides in the mitochondrion inner membrane. Its subcellular location is the mitochondrion. Component of the MICOS complex, a large protein complex of the mitochondrial inner membrane that plays crucial roles in the maintenance of crista junctions, inner membrane architecture, and formation of contact sites to the outer membrane. Plays an important role in the maintenance of the MICOS complex stability and the mitochondrial cristae morphology. This is MICOS complex subunit MIC60 from Mesocricetus auratus (Golden hamster).